We begin with the raw amino-acid sequence, 457 residues long: ATP synthase subunit beta (457 aa).

147–154 lines the ATP pocket; the sequence is GGAGVGKT.

Belongs to the ATPase alpha/beta chains family. As to quaternary structure, F-type ATPases have 2 components, CF(1) - the catalytic core - and CF(0) - the membrane proton channel. CF(1) has five subunits: alpha(3), beta(3), gamma(1), delta(1), epsilon(1). CF(0) has three main subunits: a(1), b(2) and c(9-12). The alpha and beta chains form an alternating ring which encloses part of the gamma chain. CF(1) is attached to CF(0) by a central stalk formed by the gamma and epsilon chains, while a peripheral stalk is formed by the delta and b chains.

It localises to the cell inner membrane. The catalysed reaction is ATP + H2O + 4 H(+)(in) = ADP + phosphate + 5 H(+)(out). Produces ATP from ADP in the presence of a proton gradient across the membrane. The catalytic sites are hosted primarily by the beta subunits. This chain is ATP synthase subunit beta, found in Haemophilus influenzae (strain 86-028NP).